Reading from the N-terminus, the 300-residue chain is Lysophosphatidic acid:oleoyl-CoA acyltransferase 1 (300 aa).

Residues Leu33–Leu53 traverse the membrane as a helical segment. Positions Cys101–Asp106 match the HXXXXD motif motif.

It belongs to the 1-acyl-sn-glycerol-3-phosphate acyltransferase family.

Its subcellular location is the lipid droplet. It localises to the endoplasmic reticulum membrane. The catalysed reaction is a 1-acyl-sn-glycero-3-phosphate + an acyl-CoA = a 1,2-diacyl-sn-glycero-3-phosphate + CoA. The enzyme catalyses 1-hexadecanoyl-sn-glycero-3-phosphate + (9Z)-octadecenoyl-CoA = 1-hexadecanoyl-2-(9Z-octadecenoyl)-sn-glycero-3-phosphate + CoA. In terms of biological role, acyl-CoA-dependent lysophosphatidic acid acyltransferase with preference for oleoyl-CoA. Involved in triacylglyceride homeostasis and lipid droplet formation. Involved in vacuolar protein sorting. This Saccharomyces cerevisiae (strain ATCC 204508 / S288c) (Baker's yeast) protein is Lysophosphatidic acid:oleoyl-CoA acyltransferase 1.